Reading from the N-terminus, the 317-residue chain is Beta-ketoacyl-[acyl-carrier-protein] synthase III (317 aa).

Active-site residues include C112 and H244. The tract at residues Q245–R249 is ACP-binding. N274 is an active-site residue.

This sequence belongs to the thiolase-like superfamily. FabH family. In terms of assembly, homodimer.

The protein resides in the cytoplasm. The enzyme catalyses malonyl-[ACP] + acetyl-CoA + H(+) = 3-oxobutanoyl-[ACP] + CO2 + CoA. It functions in the pathway lipid metabolism; fatty acid biosynthesis. In terms of biological role, catalyzes the condensation reaction of fatty acid synthesis by the addition to an acyl acceptor of two carbons from malonyl-ACP. Catalyzes the first condensation reaction which initiates fatty acid synthesis and may therefore play a role in governing the total rate of fatty acid production. Possesses both acetoacetyl-ACP synthase and acetyl transacylase activities. Its substrate specificity determines the biosynthesis of branched-chain and/or straight-chain of fatty acids. This is Beta-ketoacyl-[acyl-carrier-protein] synthase III from Salmonella paratyphi A (strain ATCC 9150 / SARB42).